Reading from the N-terminus, the 72-residue chain is Translation initiation factor IF-1 (72 aa).

The S1-like domain maps to 1–72 (MAKDDVIQMQ…SRARIVFRAK (72 aa)).

The protein belongs to the IF-1 family. In terms of assembly, component of the 30S ribosomal translation pre-initiation complex which assembles on the 30S ribosome in the order IF-2 and IF-3, IF-1 and N-formylmethionyl-tRNA(fMet); mRNA recruitment can occur at any time during PIC assembly.

It localises to the cytoplasm. In terms of biological role, one of the essential components for the initiation of protein synthesis. Stabilizes the binding of IF-2 and IF-3 on the 30S subunit to which N-formylmethionyl-tRNA(fMet) subsequently binds. Helps modulate mRNA selection, yielding the 30S pre-initiation complex (PIC). Upon addition of the 50S ribosomal subunit IF-1, IF-2 and IF-3 are released leaving the mature 70S translation initiation complex. This chain is Translation initiation factor IF-1, found in Burkholderia thailandensis (strain ATCC 700388 / DSM 13276 / CCUG 48851 / CIP 106301 / E264).